Reading from the N-terminus, the 427-residue chain is Dihydroorotase (427 aa).

2 residues coordinate Zn(2+): His58 and His60. Substrate-binding positions include 60 to 62 (HLR) and Asn92. Residues Asp150, His177, and His230 each contribute to the Zn(2+) site. Substrate is bound at residue Asn276. Residue Asp303 coordinates Zn(2+). Asp303 is a catalytic residue. Substrate contacts are provided by residues His307 and 321–322 (FG).

The protein belongs to the metallo-dependent hydrolases superfamily. DHOase family. Class I DHOase subfamily. Zn(2+) is required as a cofactor.

It catalyses the reaction (S)-dihydroorotate + H2O = N-carbamoyl-L-aspartate + H(+). Its pathway is pyrimidine metabolism; UMP biosynthesis via de novo pathway; (S)-dihydroorotate from bicarbonate: step 3/3. In terms of biological role, catalyzes the reversible cyclization of carbamoyl aspartate to dihydroorotate. The protein is Dihydroorotase of Macrococcus caseolyticus (strain JCSC5402) (Macrococcoides caseolyticum).